The following is a 420-amino-acid chain: Serine hydroxymethyltransferase (420 aa).

Residues leucine 123 and 127–129 (GHL) each bind (6S)-5,6,7,8-tetrahydrofolate. The residue at position 232 (lysine 232) is an N6-(pyridoxal phosphate)lysine.

The protein belongs to the SHMT family. Homodimer. It depends on pyridoxal 5'-phosphate as a cofactor.

Its subcellular location is the cytoplasm. The catalysed reaction is (6R)-5,10-methylene-5,6,7,8-tetrahydrofolate + glycine + H2O = (6S)-5,6,7,8-tetrahydrofolate + L-serine. Its pathway is one-carbon metabolism; tetrahydrofolate interconversion. It participates in amino-acid biosynthesis; glycine biosynthesis; glycine from L-serine: step 1/1. Catalyzes the reversible interconversion of serine and glycine with tetrahydrofolate (THF) serving as the one-carbon carrier. This reaction serves as the major source of one-carbon groups required for the biosynthesis of purines, thymidylate, methionine, and other important biomolecules. Also exhibits THF-independent aldolase activity toward beta-hydroxyamino acids, producing glycine and aldehydes, via a retro-aldol mechanism. This Ehrlichia chaffeensis (strain ATCC CRL-10679 / Arkansas) protein is Serine hydroxymethyltransferase.